Here is a 144-residue protein sequence, read N- to C-terminus: uncharacterized protein (144 aa).

N-linked (GlcNAc...) asparagine glycosylation is found at Asn14 and Asn15. Residues 90–110 (FSWFIFGLFIACLLLCITLVL) form a helical membrane-spanning segment. Positions 120–144 (NKATEVVPSSNIDDEEKQLSLSDMI) are disordered.

The protein resides in the membrane. This is an uncharacterized protein from Saccharomyces cerevisiae (strain ATCC 204508 / S288c) (Baker's yeast).